The chain runs to 96 residues: Aspartyl/glutamyl-tRNA(Asn/Gln) amidotransferase subunit C (96 aa).

The protein belongs to the GatC family. In terms of assembly, heterotrimer of A, B and C subunits.

The enzyme catalyses L-glutamyl-tRNA(Gln) + L-glutamine + ATP + H2O = L-glutaminyl-tRNA(Gln) + L-glutamate + ADP + phosphate + H(+). It catalyses the reaction L-aspartyl-tRNA(Asn) + L-glutamine + ATP + H2O = L-asparaginyl-tRNA(Asn) + L-glutamate + ADP + phosphate + 2 H(+). Allows the formation of correctly charged Asn-tRNA(Asn) or Gln-tRNA(Gln) through the transamidation of misacylated Asp-tRNA(Asn) or Glu-tRNA(Gln) in organisms which lack either or both of asparaginyl-tRNA or glutaminyl-tRNA synthetases. The reaction takes place in the presence of glutamine and ATP through an activated phospho-Asp-tRNA(Asn) or phospho-Glu-tRNA(Gln). The protein is Aspartyl/glutamyl-tRNA(Asn/Gln) amidotransferase subunit C of Leptospira borgpetersenii serovar Hardjo-bovis (strain JB197).